A 112-amino-acid polypeptide reads, in one-letter code: DNA-directed RNA polymerases I and III subunit RPAC2 (112 aa).

This sequence belongs to the archaeal Rpo11/eukaryotic RPB11/RPC19 RNA polymerase subunit family. Component of the RNA polymerase I (Pol I) and RNA polymerase III (Pol III) complexes consisting of at least 13 and 17 subunits, respectively.

It localises to the nucleus. DNA-dependent RNA polymerase catalyzes the transcription of DNA into RNA using the four ribonucleoside triphosphates as substrates. Common core component of RNA polymerases I and III which synthesize ribosomal RNA precursors and small RNAs, such as 5S rRNA and tRNAs, respectively. The polypeptide is DNA-directed RNA polymerases I and III subunit RPAC2 (polr1d) (Danio rerio (Zebrafish)).